Here is a 299-residue protein sequence, read N- to C-terminus: Ribonuclease H2 subunit A (299 aa).

M1 carries the post-translational modification N-acetylmethionine. The RNase H type-2 domain maps to 28–251 (PCVLGVDEAG…AQSILESEAE (224 aa)). The a divalent metal cation site is built by D34, E35, and D142. Phosphothreonine is present on residues T205 and T217. The segment at 250–272 (AEDVKWEDSETGDPKGPGKIKSY) is disordered. At S258 the chain carries Phosphoserine.

The protein belongs to the RNase HII family. Eukaryotic subfamily. As to quaternary structure, the RNase H2 complex is a heterotrimer composed of the catalytic subunit RNASEH2A and the non-catalytic subunits RNASEH2B and RNASEH2C. The cofactor is Mn(2+). Mg(2+) is required as a cofactor.

The protein localises to the nucleus. It carries out the reaction Endonucleolytic cleavage to 5'-phosphomonoester.. Catalytic subunit of RNase HII, an endonuclease that specifically degrades the RNA of RNA:DNA hybrids. Participates in DNA replication, possibly by mediating the removal of lagging-strand Okazaki fragment RNA primers during DNA replication. Mediates the excision of single ribonucleotides from DNA:RNA duplexes. In Bos taurus (Bovine), this protein is Ribonuclease H2 subunit A (RNASEH2A).